A 152-amino-acid polypeptide reads, in one-letter code: MFRGASAVNLDSKGRIAIPTRYRPEILEINQGQMVCTVDIRQPCLLLYPLNQWEIIEQKLSKLSNFNPEERSLQRVMLGYATECELDSAGRILISAPLRQHAKLEKSIMLVGQLNKFEIWSESEWQAQIEKDMTLGASGQFAMSEALSMLSL.

2 SpoVT-AbrB domains span residues 5–52 (ASAV…PLNQ) and 81–124 (ATEC…SESE).

Belongs to the MraZ family. In terms of assembly, forms oligomers.

It is found in the cytoplasm. The protein localises to the nucleoid. This is Transcriptional regulator MraZ from Histophilus somni (strain 2336) (Haemophilus somnus).